The chain runs to 341 residues: Phosphatidylserine decarboxylase proenzyme (341 aa).

Catalysis depends on charge relay system; for autoendoproteolytic cleavage activity residues Asp-90, His-147, and Ser-254. Ser-254 serves as the catalytic Schiff-base intermediate with substrate; via pyruvic acid; for decarboxylase activity. Ser-254 carries the pyruvic acid (Ser); by autocatalysis modification. Residues 287-341 (RQDEQTPVVFPEGTELEENDAAQPPVAATSEPVQADGQNPAAEVSGQTGHKPDAP) are disordered.

Belongs to the phosphatidylserine decarboxylase family. PSD-B subfamily. Prokaryotic type I sub-subfamily. Heterodimer of a large membrane-associated beta subunit and a small pyruvoyl-containing alpha subunit. Requires pyruvate as cofactor. Is synthesized initially as an inactive proenzyme. Formation of the active enzyme involves a self-maturation process in which the active site pyruvoyl group is generated from an internal serine residue via an autocatalytic post-translational modification. Two non-identical subunits are generated from the proenzyme in this reaction, and the pyruvate is formed at the N-terminus of the alpha chain, which is derived from the carboxyl end of the proenzyme. The autoendoproteolytic cleavage occurs by a canonical serine protease mechanism, in which the side chain hydroxyl group of the serine supplies its oxygen atom to form the C-terminus of the beta chain, while the remainder of the serine residue undergoes an oxidative deamination to produce ammonia and the pyruvoyl prosthetic group on the alpha chain. During this reaction, the Ser that is part of the protease active site of the proenzyme becomes the pyruvoyl prosthetic group, which constitutes an essential element of the active site of the mature decarboxylase.

Its subcellular location is the cell membrane. It carries out the reaction a 1,2-diacyl-sn-glycero-3-phospho-L-serine + H(+) = a 1,2-diacyl-sn-glycero-3-phosphoethanolamine + CO2. It participates in phospholipid metabolism; phosphatidylethanolamine biosynthesis; phosphatidylethanolamine from CDP-diacylglycerol: step 2/2. In terms of biological role, catalyzes the formation of phosphatidylethanolamine (PtdEtn) from phosphatidylserine (PtdSer). The chain is Phosphatidylserine decarboxylase proenzyme from Pectobacterium atrosepticum (strain SCRI 1043 / ATCC BAA-672) (Erwinia carotovora subsp. atroseptica).